A 148-amino-acid polypeptide reads, in one-letter code: Large ribosomal subunit protein bL27m (148 aa).

The transit peptide at methionine 1–histidine 30 directs the protein to the mitochondrion. The disordered stretch occupies residues valine 28–glycine 48.

The protein belongs to the bacterial ribosomal protein bL27 family. Component of the mitochondrial ribosome large subunit (39S) which comprises a 16S rRNA and about 50 distinct proteins.

The protein resides in the mitochondrion. This is Large ribosomal subunit protein bL27m (Mrpl27) from Mus musculus (Mouse).